A 107-amino-acid polypeptide reads, in one-letter code: uncharacterized protein (107 aa).

A disordered region spans residues 88 to 107; that stretch reads GSTPWGSGRQVNAARPIGGR.

The protein localises to the virion. This is an uncharacterized protein from Acanthamoeba polyphaga (Amoeba).